Consider the following 497-residue polypeptide: Lysine--tRNA ligase (497 aa).

Mg(2+) is bound by residues Glu405 and Glu412.

It belongs to the class-II aminoacyl-tRNA synthetase family. Homodimer. The cofactor is Mg(2+).

It localises to the cytoplasm. The catalysed reaction is tRNA(Lys) + L-lysine + ATP = L-lysyl-tRNA(Lys) + AMP + diphosphate. In Gloeobacter violaceus (strain ATCC 29082 / PCC 7421), this protein is Lysine--tRNA ligase.